Here is a 240-residue protein sequence, read N- to C-terminus: Dihydromonapterin reductase (240 aa).

Residue Y152 is the Proton acceptor of the active site.

This sequence belongs to the short-chain dehydrogenases/reductases (SDR) family. FolM subfamily.

The enzyme catalyses (6S)-5,6,7,8-tetrahydrofolate + NADP(+) = 7,8-dihydrofolate + NADPH + H(+). It catalyses the reaction 7,8-dihydromonapterin + NADPH + H(+) = 5,6,7,8-tetrahydromonapterin + NADP(+). Its function is as follows. Catalyzes the reduction of dihydromonapterin to tetrahydromonapterin. Also has lower activity with dihydrofolate. This Shigella flexneri serotype 5b (strain 8401) protein is Dihydromonapterin reductase (folM).